The sequence spans 615 residues: Deoxyribodipyrimidine photo-lyase (615 aa).

The interval Met-1–Lys-53 is disordered. The segment covering Pro-11 to Pro-21 has biased composition (polar residues). A compositionally biased stretch (low complexity) spans Thr-31–Thr-40. Positions Gln-108–Val-249 constitute a Photolyase/cryptochrome alpha/beta domain. Tyr-352 provides a ligand contact to FAD. Arg-356 is a binding site for DNA. Thr-364 to Ser-368 lines the FAD pocket. Interaction with DNA stretches follow at residues Glu-407–Tyr-414 and Asn-474–Arg-475. Asp-505–Asp-507 provides a ligand contact to FAD. Gln-537 contacts DNA.

The protein belongs to the DNA photolyase class-1 family. As to quaternary structure, monomer. The cofactor is FAD. (6R)-5,10-methylene-5,6,7,8-tetrahydrofolate serves as cofactor.

The enzyme catalyses cyclobutadipyrimidine (in DNA) = 2 pyrimidine residues (in DNA).. In terms of biological role, involved in repair of UV radiation-induced DNA damage. Catalyzes the light-dependent monomerization (300-600 nm) of cyclobutyl pyrimidine dimers (in cis-syn configuration), which are formed between adjacent bases on the same DNA strand upon exposure to ultraviolet radiation. The sequence is that of Deoxyribodipyrimidine photo-lyase (phr) from Neurospora crassa (strain ATCC 24698 / 74-OR23-1A / CBS 708.71 / DSM 1257 / FGSC 987).